A 98-amino-acid chain; its full sequence is NADH-ubiquinone oxidoreductase chain 4L (98 aa).

3 consecutive transmembrane segments (helical) span residues 2–22 (PSIS…MLIF), 29–49 (SLLC…LTIL), and 61–81 (ILLL…LVTV).

It belongs to the complex I subunit 4L family. In terms of assembly, core subunit of respiratory chain NADH dehydrogenase (Complex I) which is composed of 45 different subunits.

The protein localises to the mitochondrion inner membrane. The catalysed reaction is a ubiquinone + NADH + 5 H(+)(in) = a ubiquinol + NAD(+) + 4 H(+)(out). Its function is as follows. Core subunit of the mitochondrial membrane respiratory chain NADH dehydrogenase (Complex I) which catalyzes electron transfer from NADH through the respiratory chain, using ubiquinone as an electron acceptor. Part of the enzyme membrane arm which is embedded in the lipid bilayer and involved in proton translocation. In Eulemur mongoz (Mongoose lemur), this protein is NADH-ubiquinone oxidoreductase chain 4L (MT-ND4L).